The sequence spans 106 residues: Venom family 8-like peptide Pr8a (106 aa).

The signal sequence occupies residues 1–17 (MSPIAFLLPFLLQMVLS).

Contains 2 disulfide bonds. In terms of tissue distribution, expressed by the venom gland (anterior main gland) (at protein level).

Its subcellular location is the secreted. The chain is Venom family 8-like peptide Pr8a from Platymeris rhadamanthus (Red spot assassin bug).